We begin with the raw amino-acid sequence, 105 residues long: uncharacterized protein (105 aa).

Helical transmembrane passes span 56–76 (ALIW…VLII) and 85–105 (INLN…GVFY).

Its subcellular location is the membrane. This is an uncharacterized protein from Aedes vexans (Inland floodwater mosquito).